Consider the following 492-residue polypeptide: Sestrin-1 (492 aa).

Residues Phe71–Ser252 are N-terminal domain; may mediate the alkylhydroperoxide reductase activity. The active-site Cysteine sulfenic acid (-SOH) intermediate is Cys130. Residues Ser293 and Ser314 each carry the phosphoserine modification. The tract at residues Pro321–Thr492 is C-terminal domain; mediates TORC1 regulation. Residues Thr386–Thr389, Thr398, and Glu463 each bind L-leucine.

The protein belongs to the sestrin family. Interacts with the GATOR2 complex which is composed of MIOS, SEC13, SEH1L, WDR24 and WDR59; the interaction is negatively regulated by leucine. Interacts with RRAGA, RRAGB, RRAGC and RRAGD; may function as a guanine nucleotide dissociation inhibitor for RRAGs and regulate them. Interacts with KEAP1, RBX1 and SQSTM1; in the SQSTM1-dependent autophagic degradation of KEAP1. May interact with PRDX1. As to expression, highly expressed in heart and also detected in liver and skeletal muscles (at protein level).

It is found in the nucleus. Its subcellular location is the cytoplasm. It carries out the reaction a hydroperoxide + L-cysteinyl-[protein] = S-hydroxy-L-cysteinyl-[protein] + an alcohol. Its function is as follows. Functions as an intracellular leucine sensor that negatively regulates the TORC1 signaling pathway through the GATOR complex. In absence of leucine, binds the GATOR subcomplex GATOR2 and prevents TORC1 signaling. Binding of leucine to SESN2 disrupts its interaction with GATOR2 thereby activating the TORC1 signaling pathway. This stress-inducible metabolic regulator may also play a role in protection against oxidative and genotoxic stresses. May positively regulate the transcription by NFE2L2 of genes involved in the response to oxidative stress by facilitating the SQSTM1-mediated autophagic degradation of KEAP1. Moreover, may prevent the accumulation of reactive oxygen species (ROS) through the alkylhydroperoxide reductase activity born by the N-terminal domain of the protein. Was originally reported to contribute to oxidative stress resistance by reducing PRDX1. However, this could not be confirmed. The protein is Sestrin-1 of Mus musculus (Mouse).